The primary structure comprises 350 residues: tRNA uridine(34) hydroxylase (350 aa).

Positions 146-240 (DDPDALFIDM…YARKAREQGL (95 aa)) constitute a Rhodanese domain. Residue Cys200 is the Cysteine persulfide intermediate of the active site.

Belongs to the TrhO family.

The catalysed reaction is uridine(34) in tRNA + AH2 + O2 = 5-hydroxyuridine(34) in tRNA + A + H2O. In terms of biological role, catalyzes oxygen-dependent 5-hydroxyuridine (ho5U) modification at position 34 in tRNAs, the first step in 5-carboxymethoxyuridine (cmo5U) biosynthesis. May be part of an alternate pathway, which is able to bypass cmo5U biogenesis in a subset of tRNAs under aerobic conditions. This Escherichia coli O157:H7 protein is tRNA uridine(34) hydroxylase.